Reading from the N-terminus, the 200-residue chain is Putative 3-methyladenine DNA glycosylase (200 aa).

Belongs to the DNA glycosylase MPG family.

In Bradyrhizobium diazoefficiens (strain JCM 10833 / BCRC 13528 / IAM 13628 / NBRC 14792 / USDA 110), this protein is Putative 3-methyladenine DNA glycosylase.